Consider the following 81-residue polypeptide: Photosystem I iron-sulfur center (81 aa).

4Fe-4S ferredoxin-type domains lie at 2-31 (SHSV…MVPW) and 39-68 (IASA…VRVY). [4Fe-4S] cluster contacts are provided by cysteine 11, cysteine 14, cysteine 17, cysteine 21, cysteine 48, cysteine 51, cysteine 54, and cysteine 58.

The eukaryotic PSI reaction center is composed of at least 11 subunits. [4Fe-4S] cluster serves as cofactor.

Its subcellular location is the plastid. It is found in the chloroplast thylakoid membrane. The catalysed reaction is reduced [plastocyanin] + hnu + oxidized [2Fe-2S]-[ferredoxin] = oxidized [plastocyanin] + reduced [2Fe-2S]-[ferredoxin]. In terms of biological role, apoprotein for the two 4Fe-4S centers FA and FB of photosystem I (PSI); essential for photochemical activity. FB is the terminal electron acceptor of PSI, donating electrons to ferredoxin. The C-terminus interacts with PsaA/B/D and helps assemble the protein into the PSI complex. Required for binding of PsaD and PsaE to PSI. PSI is a plastocyanin/cytochrome c6-ferredoxin oxidoreductase, converting photonic excitation into a charge separation, which transfers an electron from the donor P700 chlorophyll pair to the spectroscopically characterized acceptors A0, A1, FX, FA and FB in turn. The protein is Photosystem I iron-sulfur center of Emiliania huxleyi (Coccolithophore).